Consider the following 505-residue polypeptide: Midnolin (505 aa).

The Ubiquitin-like domain occupies 32-106 (MSLAIHSTTG…LTLVPTVEAG (75 aa)). Disordered regions lie at residues 155 to 176 (PWHRQGPQSPERGGERPQVSDF), 228 to 305 (SIAT…SRKP), and 440 to 485 (RLRR…GLDF). The span at 238–262 (RPVSSAARVPPVSSSPSSPVSPSPV) shows a compositional bias: low complexity. The span at 263–282 (TAGTFQSHAASTTCPEQTDC) shows a compositional bias: polar residues. Residues 283-300 (SPPASSNTTSTPGSSPTP) are compositionally biased toward low complexity.

As to quaternary structure, interacts with GCK; the interaction occurs preferentially at low glucose levels. Interacts with the proteasome.

The protein localises to the nucleus. It is found in the cytoplasm. Its subcellular location is the cytosol. It localises to the nucleolus. Its function is as follows. Facilitates the ubiquitin-independent proteasomal degradation of stimulus-induced transcription factors such as FOSB, EGR1, NR4A1, and IRF4 to the proteasome for degradation. Promotes also the degradation of other substrates such as CBX4. Plays a role in inhibiting the activity of glucokinase GCK and both glucose-induced and basal insulin secretion. In Rattus norvegicus (Rat), this protein is Midnolin.